A 256-amino-acid polypeptide reads, in one-letter code: MSSVFGSVHILAMIAIQLLLIHSVSSLNLTNAYLHHKCSNTQGKYKQGSAFEKNLNLVLSTITSIGNFRDGFRYTEEGEDPNNVFVMFQCRGDSYWSKCPPCISTAVSGLRRRCPRNKGAIIWYDQCLLKISSVASFNKIDYENDFYLSNPKNMSDRELFNKETSALLEKLANKASDRNNLDGKQLVLYAAGEKRIGTKKVSAMVQCTKDLIFTKCFECLEGILRKFPECCDGKQGGRVLGTSCNFRYELYPFLRN.

The signal sequence occupies residues 1–26; the sequence is MSSVFGSVHILAMIAIQLLLIHSVSS. 2 Gnk2-homologous domains span residues 33–136 and 142–253; these read YLHH…SVAS and YEND…LYPF.

The protein belongs to the cysteine-rich repeat secretory protein family.

It is found in the secreted. This Arabidopsis thaliana (Mouse-ear cress) protein is Cysteine-rich repeat secretory protein 29 (CRRSP29).